Reading from the N-terminus, the 243-residue chain is Venom nerve growth factor 1 (243 aa).

Positions 1–18 (MSMLCYTLIIAFLIGIWA) are cleaved as a signal peptide. A propeptide spanning residues 19–125 (APKSEDNVPL…TLNRNIRAKR (107 aa)) is cleaved from the precursor. Positions 47 to 66 (GLKTSRNTDQRHPAPKKAED) are enriched in basic and acidic residues. Residues 47–69 (GLKTSRNTDQRHPAPKKAEDQEL) are disordered. 3 disulfide bridges follow: Cys139-Cys204, Cys182-Cys232, and Cys192-Cys234. N-linked (GlcNAc...) asparagine glycosylation occurs at Asn148.

This sequence belongs to the NGF-beta family. Homodimer; non-covalently linked. Expressed by the venom gland.

The protein resides in the secreted. Nerve growth factor is important for the development and maintenance of the sympathetic and sensory nervous systems. It stimulates division and differentiation of sympathetic and embryonic sensory neurons as well as basal forebrain cholinergic neurons in the brain. Its relevance in the snake venom is not clear. However, it has been shown to inhibit metalloproteinase-dependent proteolysis of platelet glycoprotein Ib alpha, suggesting a metalloproteinase inhibition to prevent metalloprotease autodigestion and/or protection against prey proteases. Binds a lipid between the two protein chains in the homodimer. The lipid-bound form promotes histamine relase from mouse mast cells, contrary to the lipid-free form. This is Venom nerve growth factor 1 from Pseudonaja textilis (Eastern brown snake).